Consider the following 783-residue polypeptide: Glucosidase YgjK (783 aa).

The first 22 residues, 1–22 (MKIKTILTPVTCALLISFSAHA), serve as a signal peptide directing secretion. The interval 24–254 (NADNYKNVIN…TTLYTTYSHL (231 aa)) is N-terminal domain. Positions 254-299 (LLTAQEVSKEQMQIRDILARPAFYLTASQQRWEEYLKKGLTNPDAT) are linker. Residues 300–783 (PEQTRVAVKA…MLYNDFFRKQ (484 aa)) form an a domain region. 5 residues coordinate Ca(2+): D454, N456, N458, V460, and E462. D524 (proton donor) is an active-site residue. A Ca(2+)-binding site is contributed by E572. Residue E750 is the Proton acceptor of the active site.

The protein belongs to the glycosyl hydrolase 63 family.

Its function is as follows. Glucoside hydrolase that cleaves the alpha-1,3-glucosidic linkage in nigerose. Has very low activity towards maltooligosaccharides, soluble starch, nigerotriose, kojibiose and trehalose. The sequence is that of Glucosidase YgjK (ygjK) from Escherichia coli (strain K12).